The following is a 443-amino-acid chain: Chromosome partition protein MukF (443 aa).

The segment at leucine 209–isoleucine 237 is leucine-zipper.

Belongs to the MukF family. As to quaternary structure, interacts, and probably forms a ternary complex, with MukE and MukB via its C-terminal region. The complex formation is stimulated by calcium or magnesium. It is required for an interaction between MukE and MukB.

Its subcellular location is the cytoplasm. It is found in the nucleoid. Functionally, involved in chromosome condensation, segregation and cell cycle progression. May participate in facilitating chromosome segregation by condensation DNA from both sides of a centrally located replisome during cell division. Not required for mini-F plasmid partitioning. Probably acts via its interaction with MukB and MukE. Overexpression results in anucleate cells. It has a calcium binding activity. This is Chromosome partition protein MukF from Actinobacillus pleuropneumoniae serotype 5b (strain L20).